A 2211-amino-acid polypeptide reads, in one-letter code: Orsellinic acid synthase (2211 aa).

The interval 44–246 (TFREQVSDAI…TVAVVHSLYH (203 aa)) is N-terminal acylcarrier protein transacylase domain (SAT). In terms of domain architecture, Ketosynthase family 3 (KS3) spans 380–805 (WDDIAIVGMA…GSNAAVIIGE (426 aa)). Catalysis depends on for beta-ketoacyl synthase activity residues C549, H684, and H724. The tract at residues 910 to 1228 (VFIFSGQGSQ…QLTTLKKNVP (319 aa)) is malonyl-CoA:ACP transacylase (MAT) domain. The active-site For acyl/malonyl transferase activity is the S1006. The interval 1309–1440 (HAIQKLSHGA…GVVKQSNMAS (132 aa)) is N-terminal hotdog fold. The PKS/mFAS DH domain maps to 1309 to 1629 (HAIQKLSHGA…FQHVKIPLIE (321 aa)). Positions 1334–1573 (EFIEGHLVCG…GATTLRAPVV (240 aa)) are product template (PT) domain. The active-site Proton acceptor; for dehydratase activity is H1339. The segment at 1473 to 1629 (VQVFSKRAMY…FQHVKIPLIE (157 aa)) is C-terminal hotdog fold. The active-site Proton donor; for dehydratase activity is the D1537. Carrier domains lie at 1681–1755 (AAPE…EALS) and 1787–1865 (STVD…VKRP). The residue at position 1715 (S1715) is an O-(pantetheine 4'-phosphoryl)serine. Residues 1755 to 1786 (SPTPVGNDVDNDSPTPGSERGSDSAISTPASV) form a disordered region. Position 1824 is an O-(pantetheine 4'-phosphoryl)serine (S1824). Residues 1937–2204 (SGKSPLFLIH…AAVSAALVDA (268 aa)) form a thioesterase (TE) domain region.

It catalyses the reaction 3 malonyl-CoA + acetyl-CoA + 2 H(+) = orsellinate + 3 CO2 + 4 CoA. The protein operates within secondary metabolite biosynthesis. Non-reducing polyketide synthase; part of the gene cluster that mediates the biosynthesis of the bibenzoquinone oosporein, a metabolite required for fungal virulence that acts by evading host immunity to facilitate fungal multiplication in insects. The non-reducing polyketide synthase OpS1 produces orsellinic acid by condensing acetyl-CoA with 3 malonyl-CoA units. Orsellinic acid is then hydroxylated to benzenetriol by the hydroxylase OpS4. The intermediate is oxidized either nonenzymatically to 5,5'-dideoxy-oosporein or enzymatically to benzenetetrol by the oxidoreductase OpS7. The latter is further dimerized to oosporein by the catalase OpS5. OpS6 probably functions en route for protecting cells against oxidative stress by scavenging any leaked free radical form of benzenetetrol by activating the thiol group of glutathione. This Beauveria bassiana (strain ARSEF 2860) (White muscardine disease fungus) protein is Orsellinic acid synthase.